A 402-amino-acid chain; its full sequence is Odorant receptor 22c (402 aa).

Residues 1 to 42 (MTDSGQPAIADHFYRIPRISGLIVGLWPQRIRGGGGRPWHAH) lie on the Cytoplasmic side of the membrane. Residues 43-63 (LLFVFAFAMVVVGAVGEVSYG) form a helical membrane-spanning segment. Over 64–73 (CVHLDNLVVA) the chain is Extracellular. Residues 74-94 (LEAFCPGTTKAVCVLKLWVFF) form a helical membrane-spanning segment. The Cytoplasmic segment spans residues 95 to 134 (RSNRRWAELVQRLRAILWESRRQEAQRMLVGLATTANRLS). A helical membrane pass occupies residues 135–155 (LLLLSSGTATNAAFTLQPLIM). At 156–173 (GLYRWIVQLPGQTELPFN) the chain is on the extracellular side. A helical transmembrane segment spans residues 174-194 (IILPSFAVQPGVFPLTYVLLT). Residues 195-201 (ASGACTV) lie on the Cytoplasmic side of the membrane. A helical membrane pass occupies residues 202–222 (FAFSFVDGFFICSCLYICGAF). Topologically, residues 223 to 276 (RLVQQDIRRIFADLHGDSVDVFTEEMNAEVRHRLAQVVERHNAIIDFCTDLTRQ) are extracellular. A helical transmembrane segment spans residues 277 to 297 (FTVIVLMHFLSAAFVLCSTIL). Over 298 to 307 (DIMLNTSSLS) the chain is Cytoplasmic. A helical transmembrane segment spans residues 308–328 (GLTYICYIIAALTQLFLYCFG). The Extracellular portion of the chain corresponds to 329–402 (GNHVSESSAA…SYITLLKTFL (74 aa)).

This sequence belongs to the insect chemoreceptor superfamily. Heteromeric odorant receptor channel (TC 1.A.69) family. Or1a subfamily. As to quaternary structure, interacts with Orco. Complexes exist early in the endomembrane system in olfactory sensory neurons (OSNs), coupling these complexes to the conserved ciliary trafficking pathway. In terms of tissue distribution, not expressed in either the antenna or maxillary palp.

Its subcellular location is the cell membrane. Functionally, odorant receptor which mediates acceptance or avoidance behavior, depending on its substrates. The odorant receptor repertoire encodes a large collection of odor stimuli that vary widely in identity, intensity, and duration. May form a complex with Orco to form odorant-sensing units, providing sensitive and prolonged odorant signaling and calcium permeability. The sequence is that of Odorant receptor 22c (Or22c) from Drosophila melanogaster (Fruit fly).